Consider the following 338-residue polypeptide: Protein-glutamate methylesterase/protein-glutamine glutaminase 2 (338 aa).

One can recognise a Response regulatory domain in the interval 2–119 (RIGIVNDSAL…SDTKLAAGPL (118 aa)). At Asp-53 the chain carries 4-aspartylphosphate. Residues 145 to 330 (PTPTAPRLVA…PLQKIAPRLV (186 aa)) form the CheB-type methylesterase domain. Residues Ser-158, His-185, and Asp-278 contribute to the active site.

The protein belongs to the CheB family. Post-translationally, phosphorylated by CheA. Phosphorylation of the N-terminal regulatory domain activates the methylesterase activity.

The protein resides in the cytoplasm. The enzyme catalyses [protein]-L-glutamate 5-O-methyl ester + H2O = L-glutamyl-[protein] + methanol + H(+). It carries out the reaction L-glutaminyl-[protein] + H2O = L-glutamyl-[protein] + NH4(+). Functionally, involved in chemotaxis. Part of a chemotaxis signal transduction system that modulates chemotaxis in response to various stimuli. Catalyzes the demethylation of specific methylglutamate residues introduced into the chemoreceptors (methyl-accepting chemotaxis proteins or MCP) by CheR. Also mediates the irreversible deamidation of specific glutamine residues to glutamic acid. This Cupriavidus metallidurans (strain ATCC 43123 / DSM 2839 / NBRC 102507 / CH34) (Ralstonia metallidurans) protein is Protein-glutamate methylesterase/protein-glutamine glutaminase 2.